The sequence spans 81 residues: MFRIFKMSFAVIIIILALIAFNYTEHTSVIQSVMLVFLGAVMFMQGLEERKKENDGSGAFNIYTAVFVWSVSLIGFTLHII.

The next 2 helical transmembrane spans lie at 4-24 (IFKMSFAVIIIILALIAFNYT) and 61-81 (NIYTAVFVWSVSLIGFTLHII).

The protein resides in the cell membrane. This is an uncharacterized protein from Bacillus subtilis (strain 168).